Here is a 1185-residue protein sequence, read N- to C-terminus: Adhesion G-protein coupled receptor G6 (1185 aa).

A signal peptide spans 1–32 (MISFISGRWWRWKFQNTLAVFLLLICLSTSVA). Over 33 to 849 (QSCQSSTSCN…AELIDEKNNR (817 aa)) the chain is Extracellular. The cysteines at positions 41 and 67 are disulfide-linked. Residues 41 to 149 (CNVVLTDSQG…KGFHISYKQV (109 aa)) form the CUB domain. Positions 41–354 (CNVVLTDSQG…SSTQTDSTLS (314 aa)) are mediates interaction with type IV collagen. The segment at 41–839 (CNVVLTDSQG…FGILMDVSRA (799 aa)) is inhibits receptor signaling in absence of type IV collagen. N-linked (GlcNAc...) asparagine glycosylation is present at Asn68. Residues Glu89 and Asp97 each coordinate Ca(2+). The cysteines at positions 94 and 111 are disulfide-linked. Asn121 carries an N-linked (GlcNAc...) asparagine glycan. Ca(2+) contacts are provided by Asp134, Ser136, and Val137. Residues 154–355 (RNQKVTMPKS…STQTDSTLSC (202 aa)) enclose the Pentraxin (PTX) domain. 3 cysteine pairs are disulfide-bonded: Cys185–Cys248, Cys229–Cys271, and Cys369–Cys375. N-linked (GlcNAc...) asparagine glycans are attached at residues Asn395, Asn429, Asn470, Asn539, Asn550, Asn562, Asn565, Asn613, Asn680, Asn691, Asn719, Asn763, Asn799, and Asn818. Intrachain disulfides connect Cys508-Cys544 and Cys532-Cys563. One can recognise a GAIN-B domain in the interval 658–840 (PSLTISSKNL…GILMDVSRAA (183 aa)). 2 cysteine pairs are disulfide-bonded: Cys790–Cys822 and Cys809–Cys824. The segment at 790 to 840 (CVFWDFNLQNYSGGCNSDGCKVGSDSNSNRTVCLCNHLTHFGILMDVSRAA) is GPS. Residues 829-837 (HFGILMDVS) are stachel. The chain crosses the membrane as a helical span at residues 850-870 (VLTFITYIGCGISAIFSAATL). The Cytoplasmic segment spans residues 871–886 (LTYIAFEKLRRDYPSK). A helical membrane pass occupies residues 887–907 (ILMNLSTSLLFLNMVFLLDGW). The Extracellular segment spans residues 908–915 (LASYEIKE). The helical transmembrane segment at 916 to 936 (LCVTVAVFLHFFLLTSFTWMG) threads the bilayer. Topologically, residues 937–957 (LESIHMYIALVKVFNTYIRRY) are cytoplasmic. Residues 958–978 (ILKFCIVGWGVPAAIVGIVLA) traverse the membrane as a helical segment. At 979 to 1013 (VSKDSYGKNYYGKGKDGQGTSEFCWILNPVVFYVT) the chain is on the extracellular side. The chain crosses the membrane as a helical span at residues 1014–1034 (CVAYFSIIFLMNVAMFIVVMI). The Cytoplasmic segment spans residues 1035–1057 (QICGRNGKRSNRTLREDILRNLR). A helical transmembrane segment spans residues 1058 to 1080 (SVVSLTFLLGMTWGFAFFAWGPV). At 1081–1083 (SLA) the chain is on the extracellular side. The chain crosses the membrane as a helical span at residues 1084 to 1106 (FMYLFTIFNSLQGLFIFVFHCAL). Residue Asn1092 coordinates 17alpha-hydroxyprogesterone. Over 1107–1185 (KENVQKQWRR…RHSNADSTLQ (79 aa)) the chain is Cytoplasmic. Residues 1138 to 1160 (NTKKVSSDNLGKSLSSSSFGSTT) form a disordered region. Low complexity predominate over residues 1144–1158 (SDNLGKSLSSSSFGS).

The protein belongs to the G-protein coupled receptor 2 family. Adhesion G-protein coupled receptor (ADGR) subfamily. In terms of processing, autoproteolytically processed at the GPS region of the GAIN-B domain; this cleavage modulates receptor activity. Expressed in Schwann cells of the posterior lateral line nerve and in brain.

The protein resides in the cell membrane. Forms a heterodimer of 2 chains generated by proteolytic processing that remain associated through non-covalent interactions mediated by the GAIN-B domain. In the inactivated receptor, the Stachel sequence (also named stalk) is embedded in the GAIN-B domain, where it adopts a beta-strand conformation. On activation, the Stachel moves into the 7 transmembrane region and adopts a twisted hook-shaped configuration that forms contacts within the receptor, leading to coupling of a G-alpha protein, which activates signaling. The cleaved GAIN-B and N-terminal domains can then dissociate from the rest of the receptor. Functionally, adhesion G-protein coupled receptor (aGPCR) for steroid hormones, such as progesterone and 17alpha-hydroxyprogesterone (17OHP). Ligand binding causes a conformation change that triggers signaling via guanine nucleotide-binding proteins (G proteins) and modulates the activity of downstream effectors, such as adenylate cyclase. Adgrg6 is coupled to G(i) G alpha proteins and mediates inhibition of adenylate cyclase. Also able to couple to G(q) G proteins. Involved in myelination of the peripheral nervous system: required for differentiation of promyelinating Schwann cells and for normal myelination of axons. G-protein coupled receptor activity can also be activated by type IV collagen, a major constituent of the basement membrane. Also plays a role inner ear development. This Danio rerio (Zebrafish) protein is Adhesion G-protein coupled receptor G6 (adgrg6).